Reading from the N-terminus, the 324-residue chain is Annexin A10 (324 aa).

4 Annexin repeats span residues F17 to Y88, P89 to Q160, A171 to L243, and D247 to A318.

Belongs to the annexin family.

The sequence is that of Annexin A10 (ANXA10) from Homo sapiens (Human).